The following is a 609-amino-acid chain: Alpha-fetoprotein (609 aa).

Positions 1 to 18 (MKWVVSILLIFLLNSTES) are cleaved as a signal peptide. Albumin domains are found at residues 19 to 210 (RTMH…ATIT), 211 to 402 (KELR…EELQ), and 403 to 601 (KYIQ…QLIS). H22 provides a ligand contact to Cu(2+). Cystine bridges form between C99–C114, C113–C124, C148–C193, C192–C201, C224–C270, C269–C277, C289–C303, and C302–C313. 2 positions are modified to phosphoserine: S111 and S115. N-linked (GlcNAc...) asparagine glycosylation is present at N251. At S344 the chain carries Phosphoserine. 7 disulfides stabilise this stretch: C384–C393, C416–C462, C461–C472, C485–C501, C500–C511, C538–C583, and C582–C591.

The protein belongs to the ALB/AFP/VDB family. As to quaternary structure, dimeric and trimeric forms have been found in addition to the monomeric form. Sulfated. As to expression, plasma.

It is found in the secreted. Its function is as follows. Binds copper, nickel, and fatty acids as well as, and bilirubin less well than, serum albumin. In Equus caballus (Horse), this protein is Alpha-fetoprotein (AFP).